Here is a 166-residue protein sequence, read N- to C-terminus: Bacterial non-heme ferritin (166 aa).

A Ferritin-like diiron domain is found at 2 to 145 (LSKELLAALN…THIDYLTRIG (144 aa)). Residues Glu-17, Glu-50, His-53, Glu-94, and Gln-127 each contribute to the Fe cation site.

Belongs to the ferritin family. Prokaryotic subfamily.

It is found in the cytoplasm. It carries out the reaction 4 Fe(2+) + O2 + 6 H2O = 4 iron(III) oxide-hydroxide + 12 H(+). Functionally, iron-storage protein. The chain is Bacterial non-heme ferritin (ftnA) from Staphylococcus epidermidis (strain ATCC 12228 / FDA PCI 1200).